A 321-amino-acid polypeptide reads, in one-letter code: Arginine-hydroxylase NDUFAF5, mitochondrial (321 aa).

The transit peptide at 1–25 (MNVSVKSLRGVSRTWRSFSSRQGMN) directs the protein to the mitochondrion.

It belongs to the methyltransferase superfamily. In terms of assembly, interacts with NDUFS7.

Its subcellular location is the mitochondrion inner membrane. Its function is as follows. Arginine hydroxylase that mediates hydroxylation of 'Arg-111' of NDUFS7 and is involved in the assembly of mitochondrial NADH:ubiquinone oxidoreductase complex (complex I, MT-ND1) at early stages. May also have methyltransferase activity. In Danio rerio (Zebrafish), this protein is Arginine-hydroxylase NDUFAF5, mitochondrial.